A 426-amino-acid chain; its full sequence is Gamma-glutamyl phosphate reductase (426 aa).

The protein belongs to the gamma-glutamyl phosphate reductase family.

It localises to the cytoplasm. It catalyses the reaction L-glutamate 5-semialdehyde + phosphate + NADP(+) = L-glutamyl 5-phosphate + NADPH + H(+). It participates in amino-acid biosynthesis; L-proline biosynthesis; L-glutamate 5-semialdehyde from L-glutamate: step 2/2. Catalyzes the NADPH-dependent reduction of L-glutamate 5-phosphate into L-glutamate 5-semialdehyde and phosphate. The product spontaneously undergoes cyclization to form 1-pyrroline-5-carboxylate. The sequence is that of Gamma-glutamyl phosphate reductase from Paracidovorax citrulli (strain AAC00-1) (Acidovorax citrulli).